A 183-amino-acid chain; its full sequence is Adenylate kinase (183 aa).

ATP is bound at residue 12–17 (GAGKGT). The NMP stretch occupies residues 32-61 (STGDLLRSEVAAGTALGQEAEAVMNRGELV). AMP is bound by residues T33, R38, 59-61 (ELV), 86-89 (GFPR), and Q93. Positions 127-133 (ARGRDDD) are LID. Position 128 (R128) interacts with ATP. Residues R130 and R141 each contribute to the AMP site. Position 169 (G169) interacts with ATP.

This sequence belongs to the adenylate kinase family. Monomer.

It localises to the cytoplasm. It carries out the reaction AMP + ATP = 2 ADP. It functions in the pathway purine metabolism; AMP biosynthesis via salvage pathway; AMP from ADP: step 1/1. In terms of biological role, catalyzes the reversible transfer of the terminal phosphate group between ATP and AMP. Plays an important role in cellular energy homeostasis and in adenine nucleotide metabolism. The polypeptide is Adenylate kinase (Parasynechococcus marenigrum (strain WH8102)).